The chain runs to 214 residues: NADH-quinone oxidoreductase subunit C (214 aa).

This sequence belongs to the complex I 30 kDa subunit family. In terms of assembly, NDH-1 is composed of 14 different subunits. Subunits NuoB, C, D, E, F, and G constitute the peripheral sector of the complex.

It is found in the cell inner membrane. It carries out the reaction a quinone + NADH + 5 H(+)(in) = a quinol + NAD(+) + 4 H(+)(out). Functionally, NDH-1 shuttles electrons from NADH, via FMN and iron-sulfur (Fe-S) centers, to quinones in the respiratory chain. The immediate electron acceptor for the enzyme in this species is believed to be ubiquinone. Couples the redox reaction to proton translocation (for every two electrons transferred, four hydrogen ions are translocated across the cytoplasmic membrane), and thus conserves the redox energy in a proton gradient. The chain is NADH-quinone oxidoreductase subunit C from Caulobacter sp. (strain K31).